The following is a 360-amino-acid chain: Tryptophan--tRNA ligase, mitochondrial (360 aa).

ATP contacts are provided by residues Gln38 and 44 to 47; that span reads HLGN. The 'HIGH' region motif lies at 39 to 47; it reads PTGIPHLGN. Asp168 contributes to the L-tryptophan binding site. ATP-binding positions include 180-182 and 229-233; these read GED and KMSKS. Residues 220–230 show a composition bias toward basic and acidic residues; it reads IRSLREPEKKM. The segment at 220–241 is disordered; it reads IRSLREPEKKMSKSSGGPRSRI. Residues 229–233 carry the 'KMSKS' region motif; it reads KMSKS.

It belongs to the class-I aminoacyl-tRNA synthetase family.

Its subcellular location is the mitochondrion matrix. It carries out the reaction tRNA(Trp) + L-tryptophan + ATP = L-tryptophyl-tRNA(Trp) + AMP + diphosphate + H(+). Catalyzes the attachment of tryptophan to tRNA(Trp). The sequence is that of Tryptophan--tRNA ligase, mitochondrial from Caenorhabditis elegans.